Reading from the N-terminus, the 233-residue chain is Fibrillarin-like rRNA/tRNA 2'-O-methyltransferase (233 aa).

Residues 89–90 (TT), 108–109 (EF), 133–134 (DA), and 153–156 (DIAQ) contribute to the S-adenosyl-L-methionine site.

Belongs to the methyltransferase superfamily. Fibrillarin family. As to quaternary structure, interacts with nop5. Component of box C/D small ribonucleoprotein (sRNP) particles that contain rpl7ae, FlpA and nop5, plus a guide RNA.

In terms of biological role, involved in pre-rRNA and tRNA processing. Utilizes the methyl donor S-adenosyl-L-methionine to catalyze the site-specific 2'-hydroxyl methylation of ribose moieties in rRNA and tRNA. Site specificity is provided by a guide RNA that base pairs with the substrate. Methylation occurs at a characteristic distance from the sequence involved in base pairing with the guide RNA. This is Fibrillarin-like rRNA/tRNA 2'-O-methyltransferase from Sulfurisphaera tokodaii (strain DSM 16993 / JCM 10545 / NBRC 100140 / 7) (Sulfolobus tokodaii).